A 49-amino-acid chain; its full sequence is Large ribosomal subunit protein bL33 (49 aa).

Belongs to the bacterial ribosomal protein bL33 family.

The chain is Large ribosomal subunit protein bL33 from Fervidobacterium nodosum (strain ATCC 35602 / DSM 5306 / Rt17-B1).